The following is a 1288-amino-acid chain: Probable serine/threonine-protein kinase drkD (1288 aa).

Residues 1–12 (MEGSFQFNKSKQ) show a composition bias toward polar residues. Disordered stretches follow at residues 1-132 (MEGS…QYHP), 156-223 (FNVS…PEEI), and 269-386 (SFGH…DDEE). Low complexity-rich tracts occupy residues 13-79 (TNNN…NSTS) and 156-220 (FNVS…QQQP). Residues 221–248 (EEIEGELNRERQERDKMLHEEAEIEQYK) adopt a coiled-coil conformation. Residues 271–291 (GHITSANSDETTNNESGSPIN) are compositionally biased toward polar residues. Basic and acidic residues predominate over residues 302 to 343 (PHSSHNEDHQSDQDNHGQFMNDEHQSTDDDQNKSDNEKESES). The span at 344–354 (ARNSGDLQQKV) shows a compositional bias: polar residues. Over residues 376–386 (EGEEEDDDDEE) the composition is skewed to acidic residues. LRR repeat units lie at residues 400–421 (KSTKLSLSNCWLKVIPTDVWSI), 423–444 (ELRDLDLSANQLKKVSKSIGLL), 446–468 (HLKRLRLNHNQLTALPKELYSLP), 469–490 (RLTTLYLNNNNFKVVPKEINRL), 492–513 (SLKTLDLSFNQITDISPQTNLH), 517–538 (NLVELRLRYNQLSSLPQNMLES), and 540–561 (HLQVLWLEGNRLPLNKAILKKS). 3 disordered regions span residues 690 to 717 (WDQQQQQQQQQSPNVSTPPISTSPVLTG), 733 to 764 (PTQQINNPPSPVTQFNQASPQHNNNQQQQQQQ), and 796 to 825 (QQQQQQNGSPQQPHVNNNNNNNIQQNKDHQ). Polar residues-rich tracts occupy residues 701–717 (SPNVSTPPISTSPVLTG) and 733–757 (PTQQINNPPSPVTQFNQASPQHNNN). Positions 851-1104 (IAIGARIGRG…EILPIMEGMI (254 aa)) constitute a Protein kinase domain. Residues 857–865 (IGRGGYGQV) and lysine 878 contribute to the ATP site. The Proton acceptor role is filled by aspartate 974. Disordered regions lie at residues 1118-1141 (GRPIPYVGPPEKDPSNKQPPQNMA) and 1245-1288 (QQQL…NDKK). Low complexity predominate over residues 1257–1268 (NRLNYNFNNSNN). The segment covering 1269 to 1282 (SDIQPMQQENNYRM) has biased composition (polar residues).

It belongs to the protein kinase superfamily. TKL Ser/Thr protein kinase family.

It catalyses the reaction L-seryl-[protein] + ATP = O-phospho-L-seryl-[protein] + ADP + H(+). The enzyme catalyses L-threonyl-[protein] + ATP = O-phospho-L-threonyl-[protein] + ADP + H(+). This is Probable serine/threonine-protein kinase drkD (drkD) from Dictyostelium discoideum (Social amoeba).